The chain runs to 244 residues: tRNA (guanine-N(1)-)-methyltransferase (244 aa).

S-adenosyl-L-methionine is bound by residues glycine 114 and 134 to 139 (IGDYVL). Residues 220 to 244 (RRPDLLEKAGASPGKSGSNFGKHDA) are disordered.

This sequence belongs to the RNA methyltransferase TrmD family. Homodimer.

The protein resides in the cytoplasm. The enzyme catalyses guanosine(37) in tRNA + S-adenosyl-L-methionine = N(1)-methylguanosine(37) in tRNA + S-adenosyl-L-homocysteine + H(+). Its function is as follows. Specifically methylates guanosine-37 in various tRNAs. The protein is tRNA (guanine-N(1)-)-methyltransferase of Rhizobium johnstonii (strain DSM 114642 / LMG 32736 / 3841) (Rhizobium leguminosarum bv. viciae).